A 229-amino-acid polypeptide reads, in one-letter code: Octanoyltransferase (229 aa).

One can recognise a BPL/LPL catalytic domain in the interval 30–223 (PDTPDTIWLV…QLQQRAQAHP (194 aa)). Residues 69–76 (RGGQITYH), 141–143 (ALG), and 154–156 (GVS) contribute to the substrate site. C172 serves as the catalytic Acyl-thioester intermediate.

The protein belongs to the LipB family.

The protein localises to the cytoplasm. It catalyses the reaction octanoyl-[ACP] + L-lysyl-[protein] = N(6)-octanoyl-L-lysyl-[protein] + holo-[ACP] + H(+). It functions in the pathway protein modification; protein lipoylation via endogenous pathway; protein N(6)-(lipoyl)lysine from octanoyl-[acyl-carrier-protein]: step 1/2. Its function is as follows. Catalyzes the transfer of endogenously produced octanoic acid from octanoyl-acyl-carrier-protein onto the lipoyl domains of lipoate-dependent enzymes. Lipoyl-ACP can also act as a substrate although octanoyl-ACP is likely to be the physiological substrate. This is Octanoyltransferase from Ralstonia pickettii (strain 12J).